Reading from the N-terminus, the 188-residue chain is NANOG neighbor homeobox (188 aa).

A disordered region spans residues 28–106 (ETILANKKQS…NEKQKQYPEK (79 aa)). Over residues 57–106 (QNGKQKWREEGEAGRKREREKEEKNEKELQDEQENKRKRENEKQKQYPEK) the composition is skewed to basic and acidic residues. Residues 102–161 (QYPEKRLVSKSLMHTLWAKFKLNRCPTIQESLSLSFEFDMTHKQISQWFCKTRKKYNKEM) constitute a DNA-binding region (homeobox).

The protein resides in the nucleus. This Homo sapiens (Human) protein is NANOG neighbor homeobox (NANOGNB).